Consider the following 472-residue polypeptide: Ribulose bisphosphate carboxylase large chain 1 (472 aa).

Residues Asn115 and Thr165 each coordinate substrate. Lys167 acts as the Proton acceptor in catalysis. Residue Lys169 participates in substrate binding. Mg(2+) contacts are provided by Lys193, Asp195, and Glu196. Lys193 is modified (N6-carboxylysine). Catalysis depends on His286, which acts as the Proton acceptor. Substrate is bound by residues Arg287, His319, and Ser371.

The protein belongs to the RuBisCO large chain family. Type I subfamily. As to quaternary structure, heterohexadecamer of 8 large chains and 8 small chains. It depends on Mg(2+) as a cofactor.

The catalysed reaction is 2 (2R)-3-phosphoglycerate + 2 H(+) = D-ribulose 1,5-bisphosphate + CO2 + H2O. It carries out the reaction D-ribulose 1,5-bisphosphate + O2 = 2-phosphoglycolate + (2R)-3-phosphoglycerate + 2 H(+). In terms of biological role, ruBisCO catalyzes two reactions: the carboxylation of D-ribulose 1,5-bisphosphate, the primary event in carbon dioxide fixation, as well as the oxidative fragmentation of the pentose substrate. Both reactions occur simultaneously and in competition at the same active site. The chain is Ribulose bisphosphate carboxylase large chain 1 from Allochromatium vinosum (strain ATCC 17899 / DSM 180 / NBRC 103801 / NCIMB 10441 / D) (Chromatium vinosum).